The primary structure comprises 222 residues: Putative germin-like protein subfamily 1 member 9 (222 aa).

The N-terminal stretch at 1 to 22 is a signal peptide; the sequence is MKSFSFLAVLSILAITLSLSKA. Cys32 and Cys49 are oxidised to a cystine. The Cupin type-1 domain maps to 63–213; it reads TGLHEARPPN…AFQVDPKIVM (151 aa). A glycan (N-linked (GlcNAc...) asparagine) is linked at Asn78. 4 residues coordinate Mn(2+): His111, His113, Glu118, and His159.

Belongs to the germin family. In terms of assembly, oligomer (believed to be a pentamer but probably hexamer).

The protein localises to the secreted. It is found in the extracellular space. The protein resides in the apoplast. Functionally, may play a role in plant defense. Probably has no oxalate oxidase activity even if the active site is conserved. The chain is Putative germin-like protein subfamily 1 member 9 from Arabidopsis thaliana (Mouse-ear cress).